The following is a 130-amino-acid chain: S-adenosylmethionine decarboxylase proenzyme (130 aa).

Serine 63 (schiff-base intermediate with substrate; via pyruvic acid) is an active-site residue. Pyruvic acid (Ser); by autocatalysis is present on serine 63. Histidine 68 acts as the Proton acceptor; for processing activity in catalysis. The Proton donor; for catalytic activity role is filled by cysteine 83.

Belongs to the prokaryotic AdoMetDC family. Type 1 subfamily. As to quaternary structure, heterotetramer of two alpha and two beta chains arranged as a dimer of alpha/beta heterodimers. The cofactor is pyruvate. In terms of processing, is synthesized initially as an inactive proenzyme. Formation of the active enzyme involves a self-maturation process in which the active site pyruvoyl group is generated from an internal serine residue via an autocatalytic post-translational modification. Two non-identical subunits are generated from the proenzyme in this reaction, and the pyruvate is formed at the N-terminus of the alpha chain, which is derived from the carboxyl end of the proenzyme. The post-translation cleavage follows an unusual pathway, termed non-hydrolytic serinolysis, in which the side chain hydroxyl group of the serine supplies its oxygen atom to form the C-terminus of the beta chain, while the remainder of the serine residue undergoes an oxidative deamination to produce ammonia and the pyruvoyl group blocking the N-terminus of the alpha chain.

It catalyses the reaction S-adenosyl-L-methionine + H(+) = S-adenosyl 3-(methylsulfanyl)propylamine + CO2. It participates in amine and polyamine biosynthesis; S-adenosylmethioninamine biosynthesis; S-adenosylmethioninamine from S-adenosyl-L-methionine: step 1/1. Its function is as follows. Catalyzes the decarboxylation of S-adenosylmethionine to S-adenosylmethioninamine (dcAdoMet), the propylamine donor required for the synthesis of the polyamines spermine and spermidine from the diamine putrescine. The polypeptide is S-adenosylmethionine decarboxylase proenzyme (Thermosipho melanesiensis (strain DSM 12029 / CIP 104789 / BI429)).